A 409-amino-acid chain; its full sequence is Tetracenomycin polyketide synthase ketoacyl synthase beta subunit (409 aa).

Residues 4–407 (PAPVVVTGLG…GFNSALVVRR (404 aa)) enclose the Ketosynthase family 3 (KS3) domain.

This sequence belongs to the thiolase-like superfamily. Beta-ketoacyl-ACP synthases family. In terms of assembly, the tetracenomycin polyketide synthase (TCM PKS) is composed of a ketosynthase complex (TcmKL), an acyl carrier protein (TcmM), a cyclase (TcmN) and a probable second cyclase (TcmJ). TcmK and TcmL form a heterodimeric complex.

The catalysed reaction is 10 malonyl-CoA + 8 H(+) = tetracenomycin F2 + 10 CO2 + 10 CoA + 2 H2O. It participates in antibiotic biosynthesis; tetracenomycin C biosynthesis. Its function is as follows. Involved in the biosynthesis of tetracenomycin C (TCM C). Part of a type II polyketide synthase (PKS) that catalyzes the synthesis of tetracenomycin F2 (TCM F2), a precursor of TCM C, from malonyl-CoA. TcmK and TcmL form a heterodimeric alpha-beta complex that catalyzes the condensation reactions between the growing acyl-enzyme chain and the malonyl-CoA extender units. This is Tetracenomycin polyketide synthase ketoacyl synthase beta subunit from Streptomyces glaucescens.